Reading from the N-terminus, the 559-residue chain is 2-isopropylmalate synthase (559 aa).

In terms of domain architecture, Pyruvate carboxyltransferase spans 33–307; it reads PIWCSSDLRD…DPQLDFSDID (275 aa). Mg(2+)-binding residues include Asp42, His246, His248, and Asn282. The interval 439–559 is regulatory domain; that stretch reads ANTPYALVSH…SLSQQEAKAA (121 aa).

It belongs to the alpha-IPM synthase/homocitrate synthase family. LeuA type 2 subfamily. In terms of assembly, homodimer. Requires Mg(2+) as cofactor.

Its subcellular location is the cytoplasm. It carries out the reaction 3-methyl-2-oxobutanoate + acetyl-CoA + H2O = (2S)-2-isopropylmalate + CoA + H(+). Its pathway is amino-acid biosynthesis; L-leucine biosynthesis; L-leucine from 3-methyl-2-oxobutanoate: step 1/4. Catalyzes the condensation of the acetyl group of acetyl-CoA with 3-methyl-2-oxobutanoate (2-ketoisovalerate) to form 3-carboxy-3-hydroxy-4-methylpentanoate (2-isopropylmalate). This is 2-isopropylmalate synthase from Pseudomonas fluorescens (strain SBW25).